We begin with the raw amino-acid sequence, 897 residues long: Probable bifunctional chitinase/lysozyme (897 aa).

Positions 1 to 24 are cleaved as a signal peptide; the sequence is MKLNIFTKSMIGMGLVCSALPALA. A Chitin-binding type-3 1 domain is found at 25-91; the sequence is MEAWNNQQGG…SQFGNTLSCE (67 aa). Disordered stretches follow at residues 90-127, 182-222, and 287-333; these read CEKS…SNSS, TEIS…PADK, and QYGN…DSVN. Low complexity predominate over residues 95–111; the sequence is SSSSSNSNTPASNTPAN. Polar residues-rich tracts occupy residues 113 to 127 and 182 to 197; these read GSAT…SNSS and TEIS…TSAP. The 67-residue stretch at 128-194 folds into the Chitin-binding type-3 2 domain; the sequence is VVAWNKQQGG…SETSNPQSCT (67 aa). A compositionally biased stretch (pro residues) spans 198–216; the sequence is QPSPDVKPAPDVKPAPDVQ. A Chitin-binding type-3 3 domain is found at 229-295; that stretch reads VVAWKGQEGS…SQYGNPGSCS (67 aa). Pro residues predominate over residues 309-318; it reads DPTPETPVTP. The segment covering 322-333 has biased composition (polar residues); it reads NSEPSTPADSVN. 2 consecutive Chitin-binding type-3 domains span residues 337–403 and 459–529; these read LQAW…TTCE and AKAW…PQFN. Positions 586–877 constitute a GH18 domain; that stretch reads KHVYAPYVDF…TNLSPEFHGL (292 aa). A disulfide bond links Cys-628 and Cys-673. The Proton donor role is filled by Glu-700.

This sequence belongs to the glycosyl hydrolase 18 family. Chitinase class II subfamily.

It localises to the periplasm. The catalysed reaction is Random endo-hydrolysis of N-acetyl-beta-D-glucosaminide (1-&gt;4)-beta-linkages in chitin and chitodextrins.. It carries out the reaction Hydrolysis of (1-&gt;4)-beta-linkages between N-acetylmuramic acid and N-acetyl-D-glucosamine residues in a peptidoglycan and between N-acetyl-D-glucosamine residues in chitodextrins.. Functionally, bifunctional enzyme with lysozyme/chitinase activity. The protein is Probable bifunctional chitinase/lysozyme (chiA) of Escherichia coli (strain K12).